The primary structure comprises 252 residues: F-box protein At5g39250 (252 aa).

The F-box domain maps to 1–42 (MFSEEVLKNVFPLLEGEDLASCMGVCKQWRDIARDDFYWKCQ).

This is F-box protein At5g39250 from Arabidopsis thaliana (Mouse-ear cress).